Consider the following 93-residue polypeptide: Protein IDA-LIKE 4 (93 aa).

The N-terminal stretch at 1-35 (MYPTRPHYWRRRLSINRPQAFLLLILCLFFIHHCD) is a signal peptide.

As to expression, expressed in mainly in buds. Lower levels in roots. Detected at the base of pedicel, in the floral and funicule abscission zones, in vascular tissues, in guard cells of young seedlings and in hydathodes.

The protein localises to the secreted. It is found in the extracellular space. May be involved in floral abscission. This Arabidopsis thaliana (Mouse-ear cress) protein is Protein IDA-LIKE 4 (IDL4).